The following is a 451-amino-acid chain: Target of rapamycin complex 1 subunit tco89 (451 aa).

The interval 1 to 35 (MERPSLSRRTSSSTVSTDGEGVYSRSTKERKRNFI) is disordered. Over residues 7–17 (SRRTSSSTVST) the composition is skewed to low complexity. Residue Ser70 is modified to Phosphoserine. Disordered regions lie at residues 122-164 (WDDA…PVTR), 176-264 (INSN…GNSL), and 362-437 (NQNF…DTDY). Residues 129 to 162 (NDSTAGNLDSDSALPTPSVTTNEAADSSRASSPV) show a composition bias toward polar residues. Over residues 203–215 (DDSAADASTTKSS) the composition is skewed to low complexity. Composition is skewed to polar residues over residues 228–242 (HSNN…NQPK), 362–376 (NQNF…TSAA), and 407–417 (QSASLNASMSA). The span at 419-430 (SHARQRSIHVPK) shows a compositional bias: basic residues.

The protein belongs to the TORC subunit TCO89 family. The target of rapamycin complex 1 (TORC1) is composed of at least mip1, pop3/wat1, tco89, toc1 and tor2. In terms of processing, either Thr-10, Ser-11, Ser-12, Ser-13 or Thr-14 and Ser-214 or Ser-215 and Ser-247 or Ser-249 are phosphorylated as well.

It localises to the cytoplasm. In terms of biological role, component of TORC1, which regulates multiple cellular processes to control cell growth in response to environmental signals. Tor2 is essential for growth. Nutrient limitation and environmental stress signals cause inactivation of TORC1. Active TORC1 positively controls cell growth and ribosome biogenesis by regulating ribosomal protein gene expression. TORC1 negatively controls G1 cell-cycle arrest, sexual development and amino acid uptake. Represses mating, meiosis and sporulation efficiency by interfering with the functions of the transcription factor ste11 and the meiosis-promoting RNA-binding protein mei2. In Schizosaccharomyces pombe (strain 972 / ATCC 24843) (Fission yeast), this protein is Target of rapamycin complex 1 subunit tco89.